The following is a 445-amino-acid chain: Gamma conglutin 2 (445 aa).

Positions Met-1–Leu-33 are cleaved as a signal peptide. In terms of domain architecture, Peptidase A1 spans His-60 to Asn-425. 5 disulfide bridges follow: Cys-88-Cys-178, Cys-102-Cys-115, Cys-107-Cys-133, Cys-118-Cys-128, and Cys-346-Cys-387. Residue Asn-130 is glycosylated (N-linked (GlcNAc...) asparagine).

It belongs to the peptidase A1 family. As to quaternary structure, two-subunit monomeric unit made of alpha and beta subunits coupled by disulfide bonds (at pH 4.5 and under non-reducing conditions). Can also form oligomers including dimer, tetramer and cyclic hexamer (trimer of dimers) (at pH &gt; 5.5). Component of globulins complexes which accumulate in seeds. Interacts with flavonoids (e.g. apigenin glucosides) present in globulins complexes. Post-translationally, glycosylated on alpha chain.

Its subcellular location is the secreted. The protein resides in the extracellular space. Functionally, sulfur-rich seed storage protein that remains undegraded at germination. This chain is Gamma conglutin 2, found in Lupinus angustifolius (Narrow-leaved blue lupine).